Consider the following 366-residue polypeptide: Geranylgeranyl pyrophosphate synthase, chloroplastic/chromoplastic (366 aa).

A disordered region spans residues 44–65 (KRTVSSSSSSSLITKEDNNLKS). Residues Lys112, Arg115, and His144 each coordinate isopentenyl diphosphate. The Mg(2+) site is built by Asp151 and Asp157. Arg162 lines the dimethylallyl diphosphate pocket. Arg163 serves as a coordination point for isopentenyl diphosphate. The dimethylallyl diphosphate site is built by Lys251, Thr252, Gln289, Lys306, and Lys316.

It belongs to the FPP/GGPP synthase family. Dimer. Mg(2+) is required as a cofactor.

It is found in the plastid. Its subcellular location is the chloroplast stroma. It localises to the chromoplast. It carries out the reaction isopentenyl diphosphate + dimethylallyl diphosphate = (2E)-geranyl diphosphate + diphosphate. It catalyses the reaction isopentenyl diphosphate + (2E)-geranyl diphosphate = (2E,6E)-farnesyl diphosphate + diphosphate. The enzyme catalyses isopentenyl diphosphate + (2E,6E)-farnesyl diphosphate = (2E,6E,10E)-geranylgeranyl diphosphate + diphosphate. It functions in the pathway isoprenoid biosynthesis; farnesyl diphosphate biosynthesis; farnesyl diphosphate from geranyl diphosphate and isopentenyl diphosphate: step 1/1. It participates in isoprenoid biosynthesis; geranyl diphosphate biosynthesis; geranyl diphosphate from dimethylallyl diphosphate and isopentenyl diphosphate: step 1/1. Its pathway is isoprenoid biosynthesis; geranylgeranyl diphosphate biosynthesis; geranylgeranyl diphosphate from farnesyl diphosphate and isopentenyl diphosphate: step 1/1. In terms of biological role, catalyzes the trans-addition of the three molecules of IPP onto DMAPP to form geranylgeranyl pyrophosphate. In Sinapis alba (White mustard), this protein is Geranylgeranyl pyrophosphate synthase, chloroplastic/chromoplastic (GGPS1).